Consider the following 361-residue polypeptide: Histidinol-phosphate aminotransferase (361 aa).

K216 is modified (N6-(pyridoxal phosphate)lysine).

Belongs to the class-II pyridoxal-phosphate-dependent aminotransferase family. Histidinol-phosphate aminotransferase subfamily. Homodimer. Pyridoxal 5'-phosphate serves as cofactor.

The enzyme catalyses L-histidinol phosphate + 2-oxoglutarate = 3-(imidazol-4-yl)-2-oxopropyl phosphate + L-glutamate. The protein operates within amino-acid biosynthesis; L-histidine biosynthesis; L-histidine from 5-phospho-alpha-D-ribose 1-diphosphate: step 7/9. In Francisella philomiragia subsp. philomiragia (strain ATCC 25017 / CCUG 19701 / FSC 153 / O#319-036), this protein is Histidinol-phosphate aminotransferase.